The sequence spans 288 residues: tRNA (guanine-N(1)-)-methyltransferase (288 aa).

The interval 82–105 (ATDAVDTSDPGDSAAPDSSAPSGA) is disordered. Residues 89-105 (SDPGDSAAPDSSAPSGA) show a composition bias toward low complexity. Residues G137 and 162–167 (IGDYVL) contribute to the S-adenosyl-L-methionine site.

Belongs to the RNA methyltransferase TrmD family. Homodimer.

The protein localises to the cytoplasm. The enzyme catalyses guanosine(37) in tRNA + S-adenosyl-L-methionine = N(1)-methylguanosine(37) in tRNA + S-adenosyl-L-homocysteine + H(+). In terms of biological role, specifically methylates guanosine-37 in various tRNAs. The protein is tRNA (guanine-N(1)-)-methyltransferase of Bifidobacterium longum (strain DJO10A).